The chain runs to 528 residues: Probable histone-arginine methyltransferase 1.4 (528 aa).

Residue Met1 is modified to N-acetylmethionine. The region spanning 144–459 is the SAM-dependent MTase PRMT-type domain; sequence EAASAKMYFH…QSYTINLTLS (316 aa). Residues Gln161, Arg170, Gly194, Glu216, and Glu246 each contribute to the S-adenosyl-L-methionine site. Active-site residues include Glu260 and Glu269. Residue Thr274 coordinates S-adenosyl-L-methionine.

It belongs to the class I-like SAM-binding methyltransferase superfamily. Protein arginine N-methyltransferase family.

It localises to the nucleus. Its subcellular location is the cytoplasm. The enzyme catalyses L-arginyl-[protein] + 2 S-adenosyl-L-methionine = N(omega),N(omega)-dimethyl-L-arginyl-[protein] + 2 S-adenosyl-L-homocysteine + 2 H(+). In terms of biological role, methylates (mono- and asymmetric dimethylation) the guanidino nitrogens of arginyl residues in several proteins involved in DNA packaging, transcription regulation, and mRNA stability. Recruited to promoters upon gene activation, methylates histone H3 and activates transcription via chromatin remodeling. The polypeptide is Probable histone-arginine methyltransferase 1.4 (PRMT14) (Arabidopsis thaliana (Mouse-ear cress)).